A 558-amino-acid polypeptide reads, in one-letter code: uncharacterized protein (558 aa).

The stretch at 47 to 78 (DFDDLNSIFKDFQKQKKNLKDNILKFYNKKKE) forms a coiled coil. 2 disordered regions span residues 239-266 (NNNNIKTETESEIESKSESESESESKIE) and 424-447 (NNNNNNNNNNNNNNNNNNNNNSGE). Residues 245 to 266 (TETESEIESKSESESESESKIE) show a composition bias toward basic and acidic residues. Low complexity predominate over residues 424–444 (NNNNNNNNNNNNNNNNNNNNN).

This is an uncharacterized protein from Dictyostelium discoideum (Social amoeba).